The sequence spans 611 residues: Probable potassium transport system protein Kup (611 aa).

13 consecutive transmembrane segments (helical) span residues 24–44 (LVFG…FLFL), 55–75 (VSLI…FLAM), 102–122 (VAVF…ECVI), 143–163 (LIAQ…LFLF), 175–195 (FGPV…ISVA), 218–238 (LLGF…EALF), 252–272 (AWGF…AYLL), 275–295 (TDVI…LYIP), 296–316 (FLLL…SGIF), 344–364 (IYIN…LLIF), 374–394 (YGLA…AIFL), 400–420 (LYMG…LSTV), and 423–443 (ITHG…IVII).

Belongs to the HAK/KUP transporter (TC 2.A.72) family.

The protein resides in the cell membrane. The catalysed reaction is K(+)(in) + H(+)(in) = K(+)(out) + H(+)(out). Functionally, transport of potassium into the cell. Likely operates as a K(+):H(+) symporter. This Methanospirillum hungatei JF-1 (strain ATCC 27890 / DSM 864 / NBRC 100397 / JF-1) protein is Probable potassium transport system protein Kup.